The chain runs to 952 residues: Ubiquitin carboxyl-terminal hydrolase CYLD (952 aa).

Positions 106 to 589 (CEERLSLFRN…LEIMIGKKKG (484 aa)) are interaction with TRIP. CAP-Gly domains lie at 153 to 198 (LAER…VFVA) and 253 to 286 (DVLP…VQLC). Residues 311–350 (RRPPKLAFMSRGVGDKGSSSHNKPKVTGSTSDPGSRNRSE) are disordered. A compositionally biased stretch (polar residues) spans 327–346 (GSSSHNKPKVTGSTSDPGSR). Ser-383 carries the post-translational modification Phosphoserine. Residues 386–409 (EMSSDFGHSSPPPQPPSMNSLSSE) form a disordered region. The tract at residues 390–465 (DFGHSSPPPQ…LPISSGNAHG (76 aa)) is interaction with TRAF2. Ser-414 and Ser-418 each carry phosphoserine. An interaction with IKBKG/NEMO region spans residues 466-680 (LEVGSLAEVK…FTSEEKDPEE (215 aa)). Positions 488–531 (GQPPGLSDVLAGLELEDECAGCTDGTFRGTRYFTCALKKALFVK) constitute a CAP-Gly 3 domain. Positions 588–946 (KGIQGHYNSC…DAYMCMYQSP (359 aa)) constitute a USP domain. Residue Cys-597 is the Nucleophile of the active site. Residues 777–829 (LEDTPRQCRICGGLAMYECRECYDDPDISAGKIKQFCKTCSTQVHLHPRRLNH) are B-box. Zn(2+) is bound by residues Cys-784, Cys-787, Cys-795, Cys-798, Cys-813, Cys-816, His-821, and His-829. The active-site Proton acceptor is His-867.

It belongs to the peptidase C19 family. In terms of assembly, interacts (via CAP-Gly domain) with IKBKG/NEMO (via proline-rich C-terminal region). Interacts with TRAF2 and TRIP. Interacts with PLK1, DVL1, DVL3, MAVS, TBK1, IKKE and RIGI. Interacts (via CAP-Gly domain) with microtubules. Interacts with HDAC6 and BCL3. Interacts with MAP3K7. Identified in a complex with TRAF6 and SQSTM1. Interacts with OPTN and SQSTM1. Interacts with CEP350. Interacts with RNF31; the interaction is indirect and is mediated via SPATA2. Interacts with SPATA2 (via the PUB domain); the interaction is direct and recruits CYLD to the LUBAC complex, thereby regulating TNF-alpha-induced necroptosis. In terms of processing, phosphorylated on several serine residues by IKKA and/or IKKB in response to immune stimuli. Phosphorylation requires IKBKG. Phosphorylation abolishes TRAF2 deubiquitination, interferes with the activation of Jun kinases, and strongly reduces CD40-dependent gene activation by NF-kappa-B. Post-translationally, ubiquitinated. Polyubiquitinated in hepatocytes treated with palmitic acid. Ubiquitination is mediated by E3 ligase TRIM47 and leads to proteasomal degradation.

It localises to the cytoplasm. Its subcellular location is the perinuclear region. The protein localises to the cytoskeleton. The protein resides in the cell membrane. It is found in the microtubule organizing center. It localises to the centrosome. Its subcellular location is the spindle. The protein localises to the cilium basal body. It catalyses the reaction Thiol-dependent hydrolysis of ester, thioester, amide, peptide and isopeptide bonds formed by the C-terminal Gly of ubiquitin (a 76-residue protein attached to proteins as an intracellular targeting signal).. Functionally, deubiquitinase that specifically cleaves 'Lys-63'- and linear 'Met-1'-linked polyubiquitin chains and is involved in NF-kappa-B activation and TNF-alpha-induced necroptosis. Negatively regulates NF-kappa-B activation by deubiquitinating upstream signaling factors. Contributes to the regulation of cell survival, proliferation and differentiation via its effects on NF-kappa-B activation. Negative regulator of Wnt signaling. Inhibits HDAC6 and thereby promotes acetylation of alpha-tubulin and stabilization of microtubules. Plays a role in the regulation of microtubule dynamics, and thereby contributes to the regulation of cell proliferation, cell polarization, cell migration, and angiogenesis. Required for normal cell cycle progress and normal cytokinesis. Inhibits nuclear translocation of NF-kappa-B. Plays a role in the regulation of inflammation and the innate immune response, via its effects on NF-kappa-B activation. Dispensable for the maturation of intrathymic natural killer cells, but required for the continued survival of immature natural killer cells. Negatively regulates TNFRSF11A signaling and osteoclastogenesis. Involved in the regulation of ciliogenesis, allowing ciliary basal bodies to migrate and dock to the plasma membrane; this process does not depend on NF-kappa-B activation. Ability to remove linear ('Met-1'-linked) polyubiquitin chains regulates innate immunity and TNF-alpha-induced necroptosis: recruited to the LUBAC complex via interaction with SPATA2 and restricts linear polyubiquitin formation on target proteins. Regulates innate immunity by restricting linear polyubiquitin formation on RIPK2 in response to NOD2 stimulation. Involved in TNF-alpha-induced necroptosis by removing linear ('Met-1'-linked) polyubiquitin chains from RIPK1, thereby regulating the kinase activity of RIPK1. Negatively regulates intestinal inflammation by removing 'Lys-63' linked polyubiquitin chain of NLRP6, thereby reducing the interaction between NLRP6 and PYCARD/ASC and formation of the NLRP6 inflammasome. Does not catalyze deubiquitination of heterotypic 'Lys-63'-/'Lys-48'-linked branched ubiquitin chains. Removes 'Lys-63' linked polyubiquitin chain of MAP3K7, which inhibits phosphorylation and blocks downstream activation of the JNK-p38 kinase cascades. Also removes 'Lys-63'-linked polyubiquitin chains of MAP3K1 and MA3P3K3, which inhibit their interaction with MAP2K1 and MAP2K2. In Mus musculus (Mouse), this protein is Ubiquitin carboxyl-terminal hydrolase CYLD (Cyld).